Reading from the N-terminus, the 372-residue chain is Cytochrome b (372 aa).

Helical transmembrane passes span Phe-25–Ile-45, Trp-69–Ile-90, Trp-105–Leu-125, and Phe-170–Met-190. 2 residues coordinate heme b: His-75 and His-89. Residues His-174 and His-188 each contribute to the heme b site. His-193 contacts a ubiquinone. Transmembrane regions (helical) follow at residues Tyr-218 to Met-238, Leu-280 to His-300, Ile-312 to Thr-332, and Phe-339 to Pro-358.

Belongs to the cytochrome b family. The cytochrome bc1 complex contains 3 respiratory subunits (MT-CYB, CYC1 and UQCRFS1), 2 core proteins (UQCRC1 and UQCRC2) and probably 6 low-molecular weight proteins. It depends on heme b as a cofactor.

Its subcellular location is the mitochondrion inner membrane. Component of the ubiquinol-cytochrome c reductase complex (complex III or cytochrome b-c1 complex) that is part of the mitochondrial respiratory chain. The b-c1 complex mediates electron transfer from ubiquinol to cytochrome c. Contributes to the generation of a proton gradient across the mitochondrial membrane that is then used for ATP synthesis. The chain is Cytochrome b (MT-CYB) from Pseudechis australis (Mulga snake).